Here is a 601-residue protein sequence, read N- to C-terminus: Probable HECT-type ubiquitin ligase-interacting protein creD (601 aa).

Disordered stretches follow at residues 374–397 (EVDPSGYRTPGPGSGPGTPFGTLS) and 454–496 (VSTD…GMAT). Over residues 455-473 (STDSFGPSSGSNSQSPASP) the composition is skewed to low complexity. Basic and acidic residues predominate over residues 475–489 (LSRRPSDEGYHDHDY).

It belongs to the arrestin family. In terms of assembly, interacts with hulA.

Functionally, component of the regulatory network controlling carbon source utilization through ubiquitination and deubiquitination involving creA, creB, creC, creD and acrB. May be involved in signaling by recognizing appropriately phosphorylated substrates via its arrestin domains and then recruit a HECT-type ubiquitin ligase such as hulA, leading to ubiquitination of the substrate, providing a link between ubiquitination and phosphorylation in protein regulation and stability. The polypeptide is Probable HECT-type ubiquitin ligase-interacting protein creD (creD) (Aspergillus fumigatus (strain CBS 144.89 / FGSC A1163 / CEA10) (Neosartorya fumigata)).